We begin with the raw amino-acid sequence, 235 residues long: Small ribosomal subunit protein uS2 (235 aa).

The protein belongs to the universal ribosomal protein uS2 family.

The sequence is that of Small ribosomal subunit protein uS2 from Geobacillus thermodenitrificans (strain NG80-2).